Consider the following 368-residue polypeptide: SH3 domain-containing protein 2 (368 aa).

Coiled-coil stretches lie at residues 1–21 and 146–210; these read MDAI…QQQA and LEDA…LGKE. Residues 1-264 enclose the BAR domain; that stretch reads MDAIRKQASR…MVSERQRIEA (264 aa). The interval 258-281 is disordered; sequence ERQRIEAPSTPSSADSMPPPPSYE. Residues 299–358 enclose the SH3 domain; that stretch reads MGYFLGEVLFPYHGVTDVELSLSTGEYVVVRKVTGSGWAEGECKGKAGWFPYGYIERRER.

In terms of assembly, homodimer. Interacts with FREE1. Interacts (via SH3 domain) with ATG8E and ATG8F. Component of a phosphoinositide 3-kinase (PI3K) complex containing ATG6, SH3P2 and FREE1. Binds to SH3P3 and DRP1A. Forms a complex made of SH3P2 and DRP1A and triggers its accumulation at the cell plate. As to expression, highly expressed in seedlings. Detected in flowers, leaves and stems.

It is found in the cytoplasm. Its subcellular location is the cytoplasmic vesicle. The protein resides in the clathrin-coated vesicle. It localises to the cell membrane. The protein localises to the late endosome. It is found in the autophagosome membrane. Regulator for autophaosome formation and/or maturation. Binds phosphatidylinositol-phosphate; highest affinity for vesicles containing PtdIns(3,4,5)P(3), followed by those containing PtdIns(4,5)P(2) and PtdIns(3,4)P(2), with minimal binding to phosphatidylinositol monophosphates, including PtdIns(3)P. Together with DRP1A, converts the fused vesicles to tubular structures at the cell plate during cytokinesis. In Arabidopsis thaliana (Mouse-ear cress), this protein is SH3 domain-containing protein 2.